Consider the following 302-residue polypeptide: MPDLADLFPGFGSEWINTSSGRIFARVGGDGPPLLLLHGFPQTHVMWHRVAPKLAERFKVIVADLPGYGWSDMPESDEQHTPYTKRAMAKQLIEAMEQLGHVHFALAGHDRGARVSYRLALDSPGRLSKLAVLDILPTYEYWQRMNRAYALKIYHWSFLAQPAPLPENLLGGDPDFYVKAKLASWTRAGDLSAFDPRAVEHYRIAFADPMRRHVMCEDYRAGAYADFEHDKIDVEAGNKIPVPMLALWGASGIAQSAATPLDVWRKWASDVQGAPIESGHFLPEEAPDQTAEALVRFFSAAP.

Residues 32-270 (PPLLLLHGFP…LDVWRKWASD (239 aa)) form the AB hydrolase-1 domain. The Nucleophile role is filled by Asp-110. Positions 111, 114, 155, 156, and 219 each coordinate fluoroacetate. The active-site Proton acceptor is His-280.

Belongs to the AB hydrolase superfamily. Epoxide hydrolase family. Homodimer.

The enzyme catalyses a haloacetate + H2O = a halide anion + glycolate + H(+). The catalysed reaction is fluoroacetate + H2O = fluoride + glycolate + H(+). It carries out the reaction chloroacetate + H2O = glycolate + chloride + H(+). Catalyzes the hydrolytic defluorination of fluoroacetate to produce glycolate. Has lower activity towards chloroacetate and bromoacetate. This chain is Fluoroacetate dehalogenase, found in Rhodopseudomonas palustris (strain ATCC BAA-98 / CGA009).